A 371-amino-acid chain; its full sequence is Phosphate acyltransferase (371 aa).

The protein belongs to the PlsX family. In terms of assembly, homodimer. Probably interacts with PlsY.

It localises to the cytoplasm. The catalysed reaction is a fatty acyl-[ACP] + phosphate = an acyl phosphate + holo-[ACP]. It functions in the pathway lipid metabolism; phospholipid metabolism. Functionally, catalyzes the reversible formation of acyl-phosphate (acyl-PO(4)) from acyl-[acyl-carrier-protein] (acyl-ACP). This enzyme utilizes acyl-ACP as fatty acyl donor, but not acyl-CoA. The chain is Phosphate acyltransferase from Polaromonas sp. (strain JS666 / ATCC BAA-500).